The primary structure comprises 813 residues: Ankyrin repeat domain-containing protein SOWAHB (813 aa).

Disordered regions lie at residues 142 to 256 and 400 to 436; these read SAAP…QSLS and ETCGSEESDSGEGGDCDTEPRDNDDADDDTFSSDSHK. A compositionally biased stretch (basic and acidic residues) spans 158-176; the sequence is MSEKARVNPSHWDTKRYYP. Residues 177-189 show a composition bias toward pro residues; it reads EDPPVPDSLPVSP. Polar residues predominate over residues 191–202; that stretch reads CTNTRQSSFTST. Residues 208–244 show a composition bias toward low complexity; it reads HSLSSNNLSSSFSSPESPGLVAKPYNASPSPAGSSPN. Over residues 245 to 256 the composition is skewed to polar residues; it reads IREQTPKSQSLS. Acidic residues predominate over residues 400–416; it reads ETCGSEESDSGEGGDCD. ANK repeat units lie at residues 657-686 and 696-726; these read TGYTALHWFAKHGCIDLFNKVVIGAKKAGI and NGYTPLHIAAIHGHHKVAIMLVEKLKVNVKV.

Belongs to the SOWAH family.

This Xenopus laevis (African clawed frog) protein is Ankyrin repeat domain-containing protein SOWAHB (sowahb).